Here is a 94-residue protein sequence, read N- to C-terminus: Large ribosomal subunit protein eL42 (94 aa).

Zn(2+) is bound by residues cysteine 11, cysteine 14, cysteine 71, and cysteine 74. The C4-type zinc-finger motif lies at 11–74; sequence CPYCKRHTIH…LDLRFVCTVC (64 aa).

Belongs to the eukaryotic ribosomal protein eL42 family. As to quaternary structure, part of the 50S ribosomal subunit. It depends on Zn(2+) as a cofactor.

Binds to the 23S rRNA. This is Large ribosomal subunit protein eL42 from Pyrococcus horikoshii (strain ATCC 700860 / DSM 12428 / JCM 9974 / NBRC 100139 / OT-3).